Reading from the N-terminus, the 2103-residue chain is uncharacterized protein (2103 aa).

Positions Met-1–Pro-12 are enriched in low complexity. The segment at Met-1–Glu-61 is disordered. A compositionally biased stretch (acidic residues) spans Glu-51–Glu-61. The 120-residue stretch at Tyr-77–Leu-196 folds into the Bromo domain. Disordered stretches follow at residues Ala-730 to Lys-750, Asn-853 to Ser-881, Gln-933 to Ser-956, Ser-1224 to Gly-1244, and Gly-1770 to Pro-1817. Basic and acidic residues predominate over residues Asp-865 to Lys-877. The span at Ser-1224 to Gln-1234 shows a compositional bias: polar residues. Low complexity predominate over residues Pro-1235–Gly-1244. Residues Arg-1773–Ser-1794 show a composition bias toward polar residues. Positions Thr-1795–Thr-1808 are enriched in low complexity.

Its subcellular location is the nucleus. This is an uncharacterized protein from Homo sapiens (Human).